Reading from the N-terminus, the 198-residue chain is Peptidyl-tRNA hydrolase (198 aa).

TRNA is bound at residue Y15. H20 (proton acceptor) is an active-site residue. The tRNA site is built by F66, N68, and N114.

It belongs to the PTH family. In terms of assembly, monomer.

The protein resides in the cytoplasm. It carries out the reaction an N-acyl-L-alpha-aminoacyl-tRNA + H2O = an N-acyl-L-amino acid + a tRNA + H(+). Functionally, hydrolyzes ribosome-free peptidyl-tRNAs (with 1 or more amino acids incorporated), which drop off the ribosome during protein synthesis, or as a result of ribosome stalling. Its function is as follows. Catalyzes the release of premature peptidyl moieties from peptidyl-tRNA molecules trapped in stalled 50S ribosomal subunits, and thus maintains levels of free tRNAs and 50S ribosomes. The protein is Peptidyl-tRNA hydrolase of Cupriavidus taiwanensis (strain DSM 17343 / BCRC 17206 / CCUG 44338 / CIP 107171 / LMG 19424 / R1) (Ralstonia taiwanensis (strain LMG 19424)).